The primary structure comprises 232 residues: Ovalbumin-related protein X (232 aa).

The protein belongs to the serpin family. Ov-serpin subfamily. In terms of tissue distribution, expressed in egg white (at protein level).

The protein is Ovalbumin-related protein X (SERPINB14C) of Gallus gallus (Chicken).